Consider the following 435-residue polypeptide: Methylenetetrahydrofolate--tRNA-(uracil-5-)-methyltransferase TrmFO (435 aa).

Residue 10-15 (GAGLAG) participates in FAD binding.

Belongs to the MnmG family. TrmFO subfamily. It depends on FAD as a cofactor.

Its subcellular location is the cytoplasm. It catalyses the reaction uridine(54) in tRNA + (6R)-5,10-methylene-5,6,7,8-tetrahydrofolate + NADH + H(+) = 5-methyluridine(54) in tRNA + (6S)-5,6,7,8-tetrahydrofolate + NAD(+). It carries out the reaction uridine(54) in tRNA + (6R)-5,10-methylene-5,6,7,8-tetrahydrofolate + NADPH + H(+) = 5-methyluridine(54) in tRNA + (6S)-5,6,7,8-tetrahydrofolate + NADP(+). In terms of biological role, catalyzes the folate-dependent formation of 5-methyl-uridine at position 54 (M-5-U54) in all tRNAs. The chain is Methylenetetrahydrofolate--tRNA-(uracil-5-)-methyltransferase TrmFO from Geotalea uraniireducens (strain Rf4) (Geobacter uraniireducens).